The chain runs to 302 residues: Nucleotide-binding protein SERP0433 (302 aa).

Residue 18–25 (GMSGAGKS) coordinates ATP. Position 69-72 (69-72 (DLRG)) interacts with GTP.

It belongs to the RapZ-like family.

Its function is as follows. Displays ATPase and GTPase activities. The protein is Nucleotide-binding protein SERP0433 of Staphylococcus epidermidis (strain ATCC 35984 / DSM 28319 / BCRC 17069 / CCUG 31568 / BM 3577 / RP62A).